The chain runs to 679 residues: Oxidant-induced cell-cycle arrest protein 5 (679 aa).

A Rab-GAP TBC domain is found at 50–441 (GVPPQLRHVV…RVWDLLLGWR (392 aa)). Low complexity predominate over residues 135–153 (NPAGSSSNANTTNIATPTP). 3 disordered regions span residues 135–159 (NPAG…SSDA), 250–270 (TNNG…NNNT), and 524–544 (QSKA…NDKS). A compositionally biased stretch (polar residues) spans 524-539 (QSKAQKDNTVPSPGSD).

This sequence belongs to the OCA5 family.

Its subcellular location is the cytoplasm. Functionally, required for replication of brome mosaic virus (BMV), a positive-strand RNA virus. The polypeptide is Oxidant-induced cell-cycle arrest protein 5 (OCA5) (Saccharomyces cerevisiae (strain JAY291) (Baker's yeast)).